Here is a 67-residue protein sequence, read N- to C-terminus: Conotoxin Cl6.6a (67 aa).

Residues 1–24 (MKLTCVLIAAVLLLAVCQLDSADA) form the signal peptide. The propeptide occupies 25–37 (TGYMRKNPSLRSP). 3 disulfide bridges follow: Cys-43-Cys-57, Cys-50-Cys-61, and Cys-56-Cys-65.

It belongs to the conotoxin O1 superfamily. As to expression, expressed by the venom duct.

Its subcellular location is the secreted. This is Conotoxin Cl6.6a from Californiconus californicus (California cone).